A 794-amino-acid polypeptide reads, in one-letter code: Ubiquitin carboxyl-terminal hydrolase 10 (794 aa).

Ala-2 bears the N-acetylalanine mark. Positions 2-99 (ALHNPQYIFG…ILGCPTSKKT (98 aa)) are interaction with p53/TP53. Residues 6–21 (PQYIFGDFSPDEFNQF) form a G3BP1-binding region. Thr-24 and Thr-99 each carry phosphothreonine. The segment at 123–164 (ESSSNAEAETLENDSGAGGLGQRERKKKKKRPPGYYSYLKDG) is disordered. Residues Ser-209, Ser-224, and Ser-316 each carry the phosphoserine modification. Positions 303 to 326 (ESADLDPAKPESQSPPAESALSVS) are disordered. Positions 313-326 (ESQSPPAESALSVS) are enriched in polar residues. Ser-332 carries the post-translational modification Phosphoserine; by ATM. Phosphoserine occurs at positions 361 and 366. The 381-residue stretch at 411 to 791 (RGLINKGNWC…TAYLLYYRRV (381 aa)) folds into the USP domain. Residue Cys-420 is the Nucleophile of the active site. Ser-543 is modified (phosphoserine). The interval 546-588 (HEKHSVSNGPGSHLIEDEELEDTGEGSEDEWEQVGPKNKTSVT) is disordered. A compositionally biased stretch (acidic residues) spans 561–577 (EDEELEDTGEGSEDEWE). Thr-568 carries the phosphothreonine modification. Ser-572 bears the Phosphoserine mark. His-745 acts as the Proton acceptor in catalysis.

The protein belongs to the peptidase C19 family. USP10 subfamily. In terms of assembly, found in a deubiquitination complex with TANK, USP10 and ZC3H12A; this complex inhibits genotoxic stress- or interleukin-1-beta (IL1B)-mediated NF-kappa-B activation by promoting IKBKG or TRAF6 deubiquitination. Interacts with IKBKG; this interaction increases in response to DNA damage. Interacts with TANK; this interaction increases in response to DNA damage. Interacts with TRAF6; this interaction increases in response to DNA damage. Interacts with ZC3H12A; this interaction increases in response to DNA damage. Interacts with G3BP1 (via NTF2 domain) and G3BP2 (via NTF2 domain); inhibiting stress granule formation. In terms of processing, phosphorylated by ATM following DNA damage, leading to stabilization and translocation it to the nucleus. Post-translationally, ubiquitinated. Deubiquitinated by USP13.

It is found in the cytoplasm. The protein resides in the nucleus. Its subcellular location is the early endosome. It catalyses the reaction Thiol-dependent hydrolysis of ester, thioester, amide, peptide and isopeptide bonds formed by the C-terminal Gly of ubiquitin (a 76-residue protein attached to proteins as an intracellular targeting signal).. With respect to regulation, specifically inhibited by spautin-1 (specific and potent autophagy inhibitor-1), a derivative of MBCQ that binds to USP10 and inhibits deubiquitinase activity. Regulated by PIK3C3/VPS34-containing complexes. In terms of biological role, hydrolase that can remove conjugated ubiquitin from target proteins such as p53/TP53, RPS2/us5, RPS3/us3, RPS10/eS10, BECN1, SNX3 and CFTR. Acts as an essential regulator of p53/TP53 stability: in unstressed cells, specifically deubiquitinates p53/TP53 in the cytoplasm, leading to counteract MDM2 action and stabilize p53/TP53. Following DNA damage, translocates to the nucleus and deubiquitinates p53/TP53, leading to regulate the p53/TP53-dependent DNA damage response. Component of a regulatory loop that controls autophagy and p53/TP53 levels: mediates deubiquitination of BECN1, a key regulator of autophagy, leading to stabilize the PIK3C3/VPS34-containing complexes. In turn, PIK3C3/VPS34-containing complexes regulate USP10 stability, suggesting the existence of a regulatory system by which PIK3C3/VPS34-containing complexes regulate p53/TP53 protein levels via USP10 and USP13. Does not deubiquitinate MDM2. Plays a key role in 40S ribosome subunit recycling when a ribosome has stalled during translation: acts both by inhibiting formation of stress granules, which store stalled translation pre-initiation complexes, and mediating deubiquitination of 40S ribosome subunits. Acts as a negative regulator of stress granules formation by lowering G3BP1 and G3BP2 valence, thereby preventing G3BP1 and G3BP2 ability to undergo liquid-liquid phase separation (LLPS) and assembly of stress granules. Promotes 40S ribosome subunit recycling following ribosome dissociation in response to ribosome stalling by mediating deubiquitination of 40S ribosomal proteins RPS2/us5, RPS3/us3 and RPS10/eS10, thereby preventing their degradation by the proteasome. Part of a ribosome quality control that takes place when ribosomes have stalled during translation initiation (iRQC): USP10 acts by removing monoubiquitination of RPS2/us5 and RPS3/us3, promoting 40S ribosomal subunit recycling. Deubiquitinates CFTR in early endosomes, enhancing its endocytic recycling. Involved in a TANK-dependent negative feedback response to attenuate NF-kappa-B activation via deubiquitinating IKBKG or TRAF6 in response to interleukin-1-beta (IL1B) stimulation or upon DNA damage. Deubiquitinates TBX21 leading to its stabilization. Plays a negative role in the RLR signaling pathway upon RNA virus infection by blocking the RIGI-mediated MAVS activation. Mechanistically, removes the unanchored 'Lys-63'-linked polyubiquitin chains of MAVS to inhibit its aggregation, essential for its activation. In Rattus norvegicus (Rat), this protein is Ubiquitin carboxyl-terminal hydrolase 10 (Usp10).